The chain runs to 414 residues: Serine--tRNA ligase (414 aa).

230 to 232 serves as a coordination point for L-serine; the sequence is TAE. ATP is bound at residue 261–263; sequence RKE. Glu-284 contacts L-serine. An ATP-binding site is contributed by 348–351; the sequence is EISS. Ser-382 provides a ligand contact to L-serine.

It belongs to the class-II aminoacyl-tRNA synthetase family. Type-1 seryl-tRNA synthetase subfamily. Homodimer. The tRNA molecule binds across the dimer.

Its subcellular location is the cytoplasm. The catalysed reaction is tRNA(Ser) + L-serine + ATP = L-seryl-tRNA(Ser) + AMP + diphosphate + H(+). It catalyses the reaction tRNA(Sec) + L-serine + ATP = L-seryl-tRNA(Sec) + AMP + diphosphate + H(+). The protein operates within aminoacyl-tRNA biosynthesis; selenocysteinyl-tRNA(Sec) biosynthesis; L-seryl-tRNA(Sec) from L-serine and tRNA(Sec): step 1/1. Its function is as follows. Catalyzes the attachment of serine to tRNA(Ser). Is also able to aminoacylate tRNA(Sec) with serine, to form the misacylated tRNA L-seryl-tRNA(Sec), which will be further converted into selenocysteinyl-tRNA(Sec). This Nitratiruptor sp. (strain SB155-2) protein is Serine--tRNA ligase.